A 988-amino-acid chain; its full sequence is Transposase for transposon Tn21 (988 aa).

The segment at 672-696 (GDGTTSSSDEQNFRTASKAKSTGHI) is disordered. The segment covering 674–695 (GTTSSSDEQNFRTASKAKSTGH) has biased composition (polar residues).

Belongs to the transposase 7 family.

In terms of biological role, required for transposition of transposon Tn21. The sequence is that of Transposase for transposon Tn21 (tnpA) from Escherichia coli.